The following is an 854-amino-acid chain: Envelope glycoprotein B (854 aa).

Positions 1-30 are cleaved as a signal peptide; that stretch reads MSKNWFPLLCASVLVVYVSIASSSTGTASG. Over 31-723 the chain is Virion surface; it reads AVTPTSPTEN…EGVVGFIKNP (693 aa). N-linked (GlcNAc...) asparagine; by host glycosylation is found at asparagine 40, asparagine 48, and asparagine 60. Disulfide bonds link cysteine 69-cysteine 524, cysteine 86-cysteine 480, cysteine 160-cysteine 225, cysteine 317-cysteine 364, and cysteine 546-cysteine 583. Residues 127–133 are involved in fusion and/or binding to host membrane; it reads SYSFIRE. Asparagine 183 carries N-linked (GlcNAc...) asparagine; by host glycosylation. An involved in fusion and/or binding to host membrane region spans residues 212-219; that stretch reads GSTWLYTT. 12 N-linked (GlcNAc...) asparagine; by host glycosylation sites follow: asparagine 256, asparagine 275, asparagine 314, asparagine 356, asparagine 378, asparagine 382, asparagine 390, asparagine 423, asparagine 426, asparagine 442, asparagine 558, and asparagine 595. Hydrophobic membrane proximal region regions lie at residues 669 to 721 and 700 to 720; these read VEGK…GFIK and VAIG…VGFI. The chain crosses the membrane as a helical span at residues 724–744; it reads FGSFTVILFLLAVLGVIYLIY. Residues 745–854 are Intravirion-facing; it reads MRQKRAYEKP…YQKIQNEYEV (110 aa).

It belongs to the herpesviridae glycoprotein B family. In terms of assembly, homotrimer; disulfide-linked. Binds to heparan sulfate proteoglycans. Interacts with gH/gL heterodimer. A proteolytic cleavage by host furin generates two subunits that remain linked by disulfide bonds.

It is found in the virion membrane. The protein localises to the host cell membrane. The protein resides in the host endosome membrane. Its subcellular location is the host Golgi apparatus membrane. Functionally, envelope glycoprotein that forms spikes at the surface of virion envelope. Essential for the initial attachment to heparan sulfate moieties of the host cell surface proteoglycans. Involved in fusion of viral and cellular membranes leading to virus entry into the host cell. Following initial binding to its host receptors, membrane fusion is mediated by the fusion machinery composed at least of gB and the heterodimer gH/gL. May be involved in the fusion between the virion envelope and the outer nuclear membrane during virion egress. This Macaca mulatta (Rhesus macaque) protein is Envelope glycoprotein B.